The chain runs to 378 residues: Erythronate-4-phosphate dehydrogenase (378 aa).

Positions 45 and 66 each coordinate substrate. Residues aspartate 146 and threonine 175 each contribute to the NAD(+) site. Arginine 208 is a catalytic residue. Aspartate 232 contributes to the NAD(+) binding site. Glutamate 237 is a catalytic residue. Histidine 254 acts as the Proton donor in catalysis. Position 257 (glycine 257) interacts with NAD(+). Tyrosine 258 serves as a coordination point for substrate.

This sequence belongs to the D-isomer specific 2-hydroxyacid dehydrogenase family. PdxB subfamily. As to quaternary structure, homodimer.

It is found in the cytoplasm. It catalyses the reaction 4-phospho-D-erythronate + NAD(+) = (R)-3-hydroxy-2-oxo-4-phosphooxybutanoate + NADH + H(+). Its pathway is cofactor biosynthesis; pyridoxine 5'-phosphate biosynthesis; pyridoxine 5'-phosphate from D-erythrose 4-phosphate: step 2/5. Functionally, catalyzes the oxidation of erythronate-4-phosphate to 3-hydroxy-2-oxo-4-phosphonooxybutanoate. The polypeptide is Erythronate-4-phosphate dehydrogenase (Pectobacterium carotovorum subsp. carotovorum (strain PC1)).